The sequence spans 326 residues: Thrombopoietin (326 aa).

The first 21 residues, 1–21 (MELTDLLLVAILLLTARLTLS), serve as a signal peptide directing secretion. 2 disulfide bridges follow: Cys28-Cys172 and Cys50-Cys106. 5 N-linked (GlcNAc...) asparagine glycosylation sites follow: Asn197, Asn206, Asn235, Asn249, and Asn256. The disordered stretch occupies residues 307–326 (FPPSPTFPTPGSPPQLPPVS). Pro residues predominate over residues 308–326 (PPSPTFPTPGSPPQLPPVS).

This sequence belongs to the EPO/TPO family.

The protein localises to the secreted. Its function is as follows. Lineage-specific cytokine affecting the proliferation and maturation of megakaryocytes from their committed progenitor cells. It acts at a late stage of megakaryocyte development. It may be the major physiological regulator of circulating platelets. This is Thrombopoietin (Thpo) from Rattus norvegicus (Rat).